Reading from the N-terminus, the 38-residue chain is Large ribosomal subunit protein bL12 (38 aa).

This sequence belongs to the bacterial ribosomal protein bL12 family. Homodimer. Part of the ribosomal stalk of the 50S ribosomal subunit. Forms a multimeric L10(L12)X complex, where L10 forms an elongated spine to which 2 to 4 L12 dimers bind in a sequential fashion. Binds GTP-bound translation factors.

In terms of biological role, forms part of the ribosomal stalk which helps the ribosome interact with GTP-bound translation factors. Is thus essential for accurate translation. The chain is Large ribosomal subunit protein bL12 (rplL) from Salinivibrio costicola (Vibrio costicola).